We begin with the raw amino-acid sequence, 92 residues long: Promotilin (92 aa).

The segment at R12 to K49 is disordered.

The protein belongs to the motilin family.

It localises to the secreted. Plays an important role in the regulation of interdigestive gastrointestinal motility and indirectly causes rhythmic contraction of duodenal and colonic smooth muscle. This chain is Promotilin (MLN), found in Equus caballus (Horse).